Here is a 333-residue protein sequence, read N- to C-terminus: Bifunctional phosphoglucose/phosphomannose isomerase (333 aa).

The SIS domain maps to 22–160 (LEGALEGVEE…SGALGVDLEA (139 aa)). The D-fructose 6-phosphate site is built by glycine 39, serine 40, serine 84, serine 86, threonine 89, and arginine 136. Glutamate 211 functions as the Proton acceptor in the catalytic mechanism. The D-fructose 6-phosphate site is built by histidine 227 and lysine 322. Residue histidine 227 is the Proton donor of the active site. Catalysis depends on lysine 322, which acts as the Proton acceptor.

It belongs to the PGI/PMI family. In terms of assembly, homodimer.

It carries out the reaction alpha-D-glucose 6-phosphate = beta-D-fructose 6-phosphate. The catalysed reaction is D-mannose 6-phosphate = D-fructose 6-phosphate. Its activity is regulated as follows. Inhibited by low concentrations of erythrose 4-phosphate and 6-phosphogluconate. Functionally, dual specificity isomerase that catalyzes the isomerization of both glucose-6-phosphate and mannose-6-phosphate to fructose-6-phosphate with similar catalytic efficiency. The protein is Bifunctional phosphoglucose/phosphomannose isomerase of Aeropyrum pernix (strain ATCC 700893 / DSM 11879 / JCM 9820 / NBRC 100138 / K1).